The following is a 379-amino-acid chain: Cytochrome b (379 aa).

A run of 4 helical transmembrane segments spans residues 34–54 (YGSL…MLAM), 78–100 (WMIR…VHIG), 113–133 (TWNI…LGYV), and 179–199 (FFSL…IHLL). Residues His84 and His98 each contribute to the heme b site. Heme b is bound by residues His183 and His197. Position 202 (His202) interacts with a ubiquinone. 4 helical membrane passes run 225–245 (FSIK…FLVL), 289–309 (LGGV…PIFS), 320–340 (WSGM…WIGA), and 345–365 (APYI…FFWM).

Belongs to the cytochrome b family. In terms of assembly, the main subunits of complex b-c1 are: cytochrome b, cytochrome c1 and the Rieske protein. Heme b is required as a cofactor.

It localises to the mitochondrion inner membrane. Component of the ubiquinol-cytochrome c reductase complex (complex III or cytochrome b-c1 complex) that is part of the mitochondrial respiratory chain. The b-c1 complex mediates electron transfer from ubiquinol to cytochrome c. Contributes to the generation of a proton gradient across the mitochondrial membrane that is then used for ATP synthesis. This chain is Cytochrome b (mt:Cyt-b), found in Epiperipatus biolleyi (Velvet worm).